Here is a 147-residue protein sequence, read N- to C-terminus: Hemoglobin subunit epsilon (147 aa).

Residues 3–147 form the Globin domain; that stretch reads HFTAEEKATI…VATALAHKYH (145 aa). Ser14 and Ser51 each carry phosphoserine. Heme b-binding residues include His64 and His93.

It belongs to the globin family. As to quaternary structure, heterotetramer of two alpha chains and two epsilon chains in early embryonic hemoglobin Gower-2; two zeta chains and two epsilon chains in early embryonic hemoglobin Gower-1. In terms of tissue distribution, red blood cells.

The epsilon chain is a beta-type chain of early mammalian embryonic hemoglobin. This chain is Hemoglobin subunit epsilon (HBE1), found in Daubentonia madagascariensis (Aye-aye).